The following is a 631-amino-acid chain: Chaperone protein HtpG (631 aa).

Residues 1–339 form an a; substrate-binding region; sequence MSAQKETLGF…SNDLPLNVSR (339 aa). The interval 340 to 556 is b; that stretch reads EILQESKDID…EHDMSAHLER (217 aa). The c stretch occupies residues 557–631; it reads MLKAAGQKIE…INKLMLELSV (75 aa).

This sequence belongs to the heat shock protein 90 family. As to quaternary structure, homodimer.

The protein resides in the cytoplasm. In terms of biological role, molecular chaperone. Has ATPase activity. The sequence is that of Chaperone protein HtpG from Chromobacterium violaceum (strain ATCC 12472 / DSM 30191 / JCM 1249 / CCUG 213 / NBRC 12614 / NCIMB 9131 / NCTC 9757 / MK).